The primary structure comprises 250 residues: ATP synthase subunit b 2 (250 aa).

The helical transmembrane segment at 2–22 threads the bilayer; the sequence is LIDWFTVFAQILNFVILLGLL.

The protein belongs to the ATPase B chain family. F-type ATPases have 2 components, F(1) - the catalytic core - and F(0) - the membrane proton channel. F(1) has five subunits: alpha(3), beta(3), gamma(1), delta(1), epsilon(1). F(0) has four main subunits: a(1), b(1), b'(1) and c(10-14). The alpha and beta chains form an alternating ring which encloses part of the gamma chain. F(1) is attached to F(0) by a central stalk formed by the gamma and epsilon chains, while a peripheral stalk is formed by the delta, b and b' chains.

The protein localises to the cellular thylakoid membrane. Functionally, f(1)F(0) ATP synthase produces ATP from ADP in the presence of a proton or sodium gradient. F-type ATPases consist of two structural domains, F(1) containing the extramembraneous catalytic core and F(0) containing the membrane proton channel, linked together by a central stalk and a peripheral stalk. During catalysis, ATP synthesis in the catalytic domain of F(1) is coupled via a rotary mechanism of the central stalk subunits to proton translocation. Its function is as follows. Component of the F(0) channel, it forms part of the peripheral stalk, linking F(1) to F(0). The chain is ATP synthase subunit b 2 from Picosynechococcus sp. (strain ATCC 27264 / PCC 7002 / PR-6) (Agmenellum quadruplicatum).